The chain runs to 300 residues: Regulatory protein NocR (300 aa).

Positions 1 to 59 (MIQSRQLEAFRPVMLTGGMTSAANLVRITQPAISRLIRDLEEEIGISLFERTGNRLRPT) constitute an HTH lysR-type domain. The segment at residues 19–38 (MTSAANLVRITQPAISRLIR) is a DNA-binding region (H-T-H motif).

The protein belongs to the LysR transcriptional regulatory family.

In terms of biological role, positive regulatory protein for the noc operon involved in nopaline catabolism and uptake. The protein is Regulatory protein NocR (nocR) of Agrobacterium tumefaciens (strain T37).